The following is a 434-amino-acid chain: Tryptophan synthase beta chain (434 aa).

The residue at position 92 (Lys92) is an N6-(pyridoxal phosphate)lysine. The disordered stretch occupies residues 411 to 434; sequence VKGGVATSPESFDASGAKGAGSQS.

The protein belongs to the TrpB family. In terms of assembly, tetramer of two alpha and two beta chains. Requires pyridoxal 5'-phosphate as cofactor.

It catalyses the reaction (1S,2R)-1-C-(indol-3-yl)glycerol 3-phosphate + L-serine = D-glyceraldehyde 3-phosphate + L-tryptophan + H2O. It participates in amino-acid biosynthesis; L-tryptophan biosynthesis; L-tryptophan from chorismate: step 5/5. In terms of biological role, the beta subunit is responsible for the synthesis of L-tryptophan from indole and L-serine. The sequence is that of Tryptophan synthase beta chain from Polaromonas naphthalenivorans (strain CJ2).